The sequence spans 312 residues: Magnesium protoporphyrin IX methyltransferase, chloroplastic (312 aa).

A chloroplast-targeting transit peptide spans 1 to 39 (MPFAPSLLSSSSSVSQFLPRFPNATRFNVTPRSRAATVV).

It belongs to the class I-like SAM-binding methyltransferase superfamily. Magnesium protoporphyrin O-methyltransferase family.

The protein localises to the plastid. The protein resides in the chloroplast membrane. It is found in the chloroplast thylakoid membrane. It carries out the reaction Mg-protoporphyrin IX + S-adenosyl-L-methionine = Mg-protoporphyrin IX 13-monomethyl ester + S-adenosyl-L-homocysteine. It participates in porphyrin-containing compound metabolism; chlorophyll biosynthesis. Its activity is regulated as follows. Regulated by the folate status via an increased concentration of S-adenosyl-homocysteine (AdoHcy), a potent inhibitor of most AdoMet-dependent methyltransferases. In terms of biological role, converts Mg-protoporphyrin IX to Mg-protoporphyrin IX methylester using S-adenosyl-L-methionine as a cofactor. Involved in chloroplast-to-nucleus signaling by acting as a negative effector of nuclear photosynthetic gene expression. This chain is Magnesium protoporphyrin IX methyltransferase, chloroplastic (CHLM), found in Arabidopsis thaliana (Mouse-ear cress).